Reading from the N-terminus, the 809-residue chain is Ferric-pyoverdine BN7/BN8 receptor (809 aa).

A signal peptide spans 1-45; sequence MNHTARKRQGWQRSVSQKLAGAVVQGIACMGASAPLLLMPAWATA. The TBDR plug domain occupies 166-273; sequence TPRETPQSLT…PSATINLIRK (108 aa). The TBDR beta-barrel domain occupies 278–809; it reads EAQASITGEA…NVMTSFKYSF (532 aa). Residues 792 to 809 carry the TonB C-terminal box motif; that stretch reads YGVYGTPRNVMTSFKYSF.

Belongs to the TonB-dependent receptor family.

It is found in the cell outer membrane. Specific receptor for the siderophores ferric pyoverdines (pseudobactins) BN8 and BN7, iron chelating molecules that allow the organism to extract iron from the environment, especially under iron-restricted conditions. The polypeptide is Ferric-pyoverdine BN7/BN8 receptor (pupB) (Pseudomonas putida (Arthrobacter siderocapsulatus)).